The chain runs to 119 residues: Large ribosomal subunit protein bL20 (119 aa).

Belongs to the bacterial ribosomal protein bL20 family.

In terms of biological role, binds directly to 23S ribosomal RNA and is necessary for the in vitro assembly process of the 50S ribosomal subunit. It is not involved in the protein synthesizing functions of that subunit. This Streptococcus pyogenes serotype M1 protein is Large ribosomal subunit protein bL20.